A 344-amino-acid chain; its full sequence is KRR1 small subunit processome component homolog (344 aa).

The KH domain occupies 126 to 194 (DIIKIGNLVH…VRDIVLDTMN (69 aa)). A compositionally biased stretch (basic residues) spans 230-246 (KNKNISKRKQPKNKKPK). The segment at 230–326 (KNKNISKRKQ…KRAAEDNKVD (97 aa)) is disordered. A coiled-coil region spans residues 271-344 (FLNKEQKQAK…MKANKKKERS (74 aa)). The span at 272–303 (LNKEQKQAKRQQERTAKQAEAAKKQDERRNKD) shows a compositional bias: basic and acidic residues.

The protein belongs to the KRR1 family. Monomer. Component of the ribosomal small subunit (SSU) processome.

Its subcellular location is the nucleus. It localises to the nucleolus. Its function is as follows. Required for 40S ribosome biogenesis. Involved in nucleolar processing of pre-18S ribosomal RNA and ribosome assembly. Binds to RNA. Required for female germline development, cell viability during eye development and for survival of dividing cells and epithelial cells during early wing disk development. The polypeptide is KRR1 small subunit processome component homolog (Drosophila mojavensis (Fruit fly)).